The sequence spans 122 residues: Fluoride-specific ion channel FluC 2 (122 aa).

The next 4 helical transmembrane spans lie at 3 to 23 (ITAI…RMFI), 38 to 58 (TSIV…LNLT), 62 to 82 (LLLL…SFIY), and 93 to 113 (FMHL…CFYL). The Na(+) site is built by Gly-72 and Ser-75.

This sequence belongs to the fluoride channel Fluc/FEX (TC 1.A.43) family.

It is found in the cell inner membrane. The enzyme catalyses fluoride(in) = fluoride(out). Its activity is regulated as follows. Na(+) is not transported, but it plays an essential structural role and its presence is essential for fluoride channel function. In terms of biological role, fluoride-specific ion channel. Important for reducing fluoride concentration in the cell, thus reducing its toxicity. This is Fluoride-specific ion channel FluC 2 from Prochlorococcus marinus (strain MIT 9312).